The following is an 86-amino-acid chain: MTEARRRQFKVGRVVSNKMQKTVVVAVDYLKPHPLYRKIIRRTSKFHAHDEQQCRIGDIVRIGETRPLSKTKRWEVVEIIKRNEEA.

Belongs to the universal ribosomal protein uS17 family. In terms of assembly, part of the 30S ribosomal subunit.

One of the primary rRNA binding proteins, it binds specifically to the 5'-end of 16S ribosomal RNA. The protein is Small ribosomal subunit protein uS17 of Roseiflexus sp. (strain RS-1).